A 256-amino-acid chain; its full sequence is 3-dehydroquinate dehydratase (256 aa).

Residues serine 19, 38-40 (EIR), and arginine 68 contribute to the 3-dehydroquinate site. The active-site Proton donor/acceptor is histidine 122. Catalysis depends on lysine 147, which acts as the Schiff-base intermediate with substrate. The 3-dehydroquinate site is built by arginine 185, threonine 204, and glutamine 208.

This sequence belongs to the type-I 3-dehydroquinase family. As to quaternary structure, homodimer.

It catalyses the reaction 3-dehydroquinate = 3-dehydroshikimate + H2O. It functions in the pathway metabolic intermediate biosynthesis; chorismate biosynthesis; chorismate from D-erythrose 4-phosphate and phosphoenolpyruvate: step 3/7. Functionally, involved in the third step of the chorismate pathway, which leads to the biosynthesis of aromatic amino acids. Catalyzes the cis-dehydration of 3-dehydroquinate (DHQ) and introduces the first double bond of the aromatic ring to yield 3-dehydroshikimate. In Methanospirillum hungatei JF-1 (strain ATCC 27890 / DSM 864 / NBRC 100397 / JF-1), this protein is 3-dehydroquinate dehydratase.